Reading from the N-terminus, the 353-residue chain is Farnesyl pyrophosphate synthase (353 aa).

Isopentenyl diphosphate contacts are provided by lysine 57, arginine 60, and glutamine 96. Lysine 57 bears the N6-(2-hydroxyisobutyryl)lysine; alternate mark. Lysine 57 carries the N6-acetyllysine; alternate modification. Mg(2+) contacts are provided by aspartate 103 and aspartate 107. Arginine 112 contributes to the dimethylallyl diphosphate binding site. Arginine 113 lines the isopentenyl diphosphate pocket. Lysine 200, threonine 201, glutamine 240, lysine 257, and lysine 266 together coordinate dimethylallyl diphosphate.

It belongs to the FPP/GGPP synthase family. Homodimer. Interacts with RSAD2. Requires Mg(2+) as cofactor.

Its subcellular location is the cytoplasm. It catalyses the reaction isopentenyl diphosphate + dimethylallyl diphosphate = (2E)-geranyl diphosphate + diphosphate. The catalysed reaction is isopentenyl diphosphate + (2E)-geranyl diphosphate = (2E,6E)-farnesyl diphosphate + diphosphate. It functions in the pathway isoprenoid biosynthesis; farnesyl diphosphate biosynthesis; farnesyl diphosphate from geranyl diphosphate and isopentenyl diphosphate: step 1/1. It participates in isoprenoid biosynthesis; geranyl diphosphate biosynthesis; geranyl diphosphate from dimethylallyl diphosphate and isopentenyl diphosphate: step 1/1. Its activity is regulated as follows. Inactivated by interferon-induced RSAD2. This inactivation may result of disruption of lipid rafts at the plasma membrane, and thus have an antiviral effect since many enveloped viruses need lipid rafts to bud efficiently out of the cell. Key enzyme in isoprenoid biosynthesis which catalyzes the formation of farnesyl diphosphate (FPP), a precursor for several classes of essential metabolites including sterols, dolichols, carotenoids, and ubiquinones. FPP also serves as substrate for protein farnesylation and geranylgeranylation. Catalyzes the sequential condensation of isopentenyl pyrophosphate with the allylic pyrophosphates, dimethylallyl pyrophosphate, and then with the resultant geranylpyrophosphate to the ultimate product farnesyl pyrophosphate. This is Farnesyl pyrophosphate synthase (Fdps) from Mus musculus (Mouse).